Here is a 1237-residue protein sequence, read N- to C-terminus: Anion exchange protein 2 (1237 aa).

The interval 1–238 (MSSAPRRPAS…YNLQERRRIG (238 aa)) is disordered. The Cytoplasmic segment spans residues 1-703 (MSSAPRRPAS…SDFRDALDPQ (703 aa)). Basic and acidic residues-rich tracts occupy residues 38–48 (LRTLGVERFEE) and 57–74 (GGEE…EYHR). 2 stretches are compositionally biased toward basic residues: residues 75–84 (QSSHHIHHPL) and 93–109 (RRRK…RRRP). Phosphoserine is present on residues serine 112, serine 131, serine 144, serine 170, serine 172, and serine 239. Acidic residues predominate over residues 119-132 (TIEEGEEDEEEASE). Position 253 is a phosphothreonine (threonine 253). N6-methyllysine is present on lysine 270. A disordered region spans residues 285-316 (VRKNAKGSTQAAREGREPGPTPRARPRAPHKP). Serine 439 is modified (phosphoserine). Residues 445 to 466 (SLLGHHHAQGTESDPHVTEPLI) are disordered. 4 helical membrane-spanning segments follow: residues 704–727 (CLAA…GLLG), 733–770 (LIGV…LLVF), 790–812 (VWIG…SFLV), and 822–843 (IFAF…IKIF). Positions 704–1237 (CLAAVIFIYF…DEYNEMPMPV (534 aa)) are membrane (anion exchange). Topologically, residues 844 to 896 (QEHPLHGCSGSNDSEAGSSSSSNMTWATTILVPDNSSASGQSGQEKPRGQPNT) are extracellular. N-linked (GlcNAc...) asparagine glycans are attached at residues asparagine 855, asparagine 866, and asparagine 878. Residues 897–914 (ALLSLVLMAGTFFIAFFL) traverse the membrane as a helical segment. The Cytoplasmic segment spans residues 915–929 (RKFKNSRFFPGRIRR). The next 5 membrane-spanning stretches (helical) occupy residues 930 to 950 (VIGD…DYSI), 984 to 1006 (PFPV…LIFM), 1032 to 1053 (LLLI…LAAA), 1087 to 1132 (VTGL…IQFY), and 1159 to 1195 (MHLF…TVPL). Residue cysteine 1169 is the site of S-palmitoyl cysteine attachment.

Belongs to the anion exchanger (TC 2.A.31) family. Expressed in the choroid plexus epithelium (at protein level). Expressed in the parotid gland and sublingual salivary gland acinar cells (at protein level). In terms of tissue distribution, widely expressed at similar levels in all tissues examined. Expressed in the testis. As to expression, predominantly expressed in stomach although they are also detected at lower levels in other tissues. Expressed in the testis. Stomach-specific. In terms of tissue distribution, expressed at slightly higher levels in lung and stomach than in other tissues.

It is found in the apical cell membrane. Its subcellular location is the basolateral cell membrane. It carries out the reaction hydrogencarbonate(in) + chloride(out) = hydrogencarbonate(out) + chloride(in). With respect to regulation, inhibited by 4,4'-diisothiocyanatostilbene-2,2'-disulfonic acid (DIDS) and acetazolamide. Muscarinic receptor stimulation enhances activity through a Ca(2+)-dependent mechanism. Sodium-independent anion exchanger which mediates the electroneutral exchange of chloride for bicarbonate ions across the cell membrane. Plays an important role in osteoclast differentiation and function. Regulates bone resorption and calpain-dependent actin cytoskeleton organization in osteoclasts via anion exchange-dependent control of pH. Essential for intracellular pH regulation in CD8(+) T-cells upon CD3 stimulation, modulating CD8(+) T-cell responses. Functionally, plays a critical role in male fertility and spermiogenesis. The protein is Anion exchange protein 2 (Slc4a2) of Mus musculus (Mouse).